The primary structure comprises 564 residues: Ribonuclease J (564 aa).

Residues H85, H87, D89, H90, H153, and D175 each coordinate Zn(2+). 375–379 provides a ligand contact to substrate; sequence HVSGH. H401 provides a ligand contact to Zn(2+).

The protein belongs to the metallo-beta-lactamase superfamily. RNA-metabolizing metallo-beta-lactamase-like family. Bacterial RNase J subfamily. In terms of assembly, homodimer, may be a subunit of the RNA degradosome. The cofactor is Zn(2+).

Its subcellular location is the cytoplasm. An RNase that has 5'-3' exonuclease and possibly endonuclease activity. Plays a role in 16S and 23S rRNA processing. Might have a role in mRNA maturation and/or decay. This Sinorhizobium meliloti (strain Sm2011 / Rm2011 / 2011) protein is Ribonuclease J.